The primary structure comprises 138 residues: Large ribosomal subunit protein uL16 (138 aa).

The disordered stretch occupies residues methionine 1 to threonine 22. The segment covering threonine 7 to asparagine 17 has biased composition (basic residues).

This sequence belongs to the universal ribosomal protein uL16 family. As to quaternary structure, part of the 50S ribosomal subunit.

In terms of biological role, binds 23S rRNA and is also seen to make contacts with the A and possibly P site tRNAs. This chain is Large ribosomal subunit protein uL16, found in Nitrosospira multiformis (strain ATCC 25196 / NCIMB 11849 / C 71).